Consider the following 625-residue polypeptide: MMNESSTEKKNELSLSFAALGVVFGDIGTSPLYAFGQVIKYFPINDHNIYGILSLIFWSLIIIVSIKYLVIVFRADNDGEGGIIALAGLIRQKIKKPGGWLLFITLVGIGLIIGDGILTPAISILSAVEGLESLSPNLAKYVLPVTLIILFFLFKMQSIGTGKIGIYFAPVMLIWFITIGVLGFLQIIQNPKVLMAINPYYAIYFFMIHKYFALFILGGVFLVMTGGEALFADLGHFGKKAIRTGWFAVALPALLLCYFGQGAFVLMHIEYIKYPFFSLSPDWFLPVMIILATIATIIASQAIISAAFSILKQASLLNLIPRLKIIYTSKFEKGEVYLPLINFILALGTCSLVVIFKSSSNLADAYGIAVNLDMLITTVLVGIIAYYCWNWHAFKVMIFPLILVIELAFFAGNIPKLLTGGWIPILIAFLGFVVMYTWHCGFEKLRELHHRDALMDAFIIDELNQNKISRQSGMGLYIIDPYDCEGESLLHHLRLNRIFFENMIFVSIKIENKPYIPIEDKFELIKKAEGFYLIFIHYGFTENINLPNELDEMFKRVYLPFEIIKNKLIYFIEIVFVEMTRERQKHMYMWQKHLFSLMIRNAVPDIQFYRLPYNKTIAIGTYYQL.

Helical transmembrane passes span 15 to 35 (LSFA…LYAF), 52 to 72 (ILSL…LVIV), 98 to 118 (GGWL…DGIL), 134 to 154 (LSPN…FFLF), 164 to 184 (IGIY…VLGF), 203 to 223 (IYFF…VFLV), 246 to 266 (WFAV…AFVL), 284 to 304 (FLPV…QAII), 336 to 356 (VYLP…VVIF), 365 to 385 (AYGI…GIIA), 394 to 414 (FKVM…AGNI), and 417 to 437 (LLTG…VMYT).

This sequence belongs to the HAK/KUP transporter (TC 2.A.72) family.

The protein resides in the cell inner membrane. The catalysed reaction is K(+)(in) + H(+)(in) = K(+)(out) + H(+)(out). Transport of potassium into the cell. Likely operates as a K(+):H(+) symporter. The protein is Probable potassium transport system protein Kup 2 of Legionella pneumophila subsp. pneumophila (strain Philadelphia 1 / ATCC 33152 / DSM 7513).